The primary structure comprises 328 residues: RNA binding protein fox-1 homolog 3 (328 aa).

A compositionally biased stretch (pro residues) spans Met-1–Thr-30. The tract at residues Met-1 to Ile-106 is disordered. A compositionally biased stretch (polar residues) spans Thr-49–Leu-87. The RRM domain maps to Lys-99 to Pro-172. Asymmetric dimethylarginine; alternate is present on Arg-192. Position 192 is an omega-N-methylarginine; alternate (Arg-192). Residue Arg-288 is modified to Asymmetric dimethylarginine.

The protein localises to the nucleus. It is found in the cytoplasm. Pre-mRNA alternative splicing regulator. Regulates alternative splicing of RBFOX2 to enhance the production of mRNA species that are targeted for nonsense-mediated decay (NMD). The polypeptide is RNA binding protein fox-1 homolog 3 (RBFOX3) (Bos taurus (Bovine)).